Here is a 114-residue protein sequence, read N- to C-terminus: Replication initiation control protein YabA (114 aa).

Zn(2+)-binding residues include histidine 84, cysteine 86, cysteine 102, and cysteine 105.

This sequence belongs to the YabA family. Homotetramer. Interacts with both DnaA and DnaN, acting as a bridge between these two proteins. Requires Zn(2+) as cofactor.

It is found in the cytoplasm. It localises to the nucleoid. Functionally, involved in control of chromosome replication initiation. Inhibits the cooperative binding of DnaA to the oriC region, thus negatively regulating initiation of chromosome replication. Inhibits the ability of DnaA-ATP to form a helix on DNA; does not disassemble preformed DnaA-DNA helices. Decreases the residence time of DnaA on the chromosome at its binding sites (oriC, replication forks and promoter-binding sites). Tethers DnaA to the replication machinery via the DNA polymerase beta sliding clamp subunit (dnaN). Associates with oriC and other DnaA targets on the chromosome in a DnaA-dependent manner. The polypeptide is Replication initiation control protein YabA (Ligilactobacillus salivarius (strain UCC118) (Lactobacillus salivarius)).